The chain runs to 330 residues: Methionyl-tRNA formyltransferase (330 aa).

112–115 (SLLP) contributes to the (6S)-5,6,7,8-tetrahydrofolate binding site.

It belongs to the Fmt family.

It catalyses the reaction L-methionyl-tRNA(fMet) + (6R)-10-formyltetrahydrofolate = N-formyl-L-methionyl-tRNA(fMet) + (6S)-5,6,7,8-tetrahydrofolate + H(+). Attaches a formyl group to the free amino group of methionyl-tRNA(fMet). The formyl group appears to play a dual role in the initiator identity of N-formylmethionyl-tRNA by promoting its recognition by IF2 and preventing the misappropriation of this tRNA by the elongation apparatus. The sequence is that of Methionyl-tRNA formyltransferase from Alcanivorax borkumensis (strain ATCC 700651 / DSM 11573 / NCIMB 13689 / SK2).